Consider the following 205-residue polypeptide: Holliday junction branch migration complex subunit RuvA (205 aa).

Positions 1–64 (MIGRLRGVLV…EDAQLLYGFI (64 aa)) are domain I. Residues 65 to 143 (TKQERALFRL…SLMEASAGSE (79 aa)) are domain II. The flexible linker stretch occupies residues 144–156 (REFVLQSNYSPTP). The segment at 157–205 (TVNSAEEDAISALISLGYKPPQASKSVSAAYKEGMDSETLIKAALKSML) is domain III.

It belongs to the RuvA family. In terms of assembly, homotetramer. Forms an RuvA(8)-RuvB(12)-Holliday junction (HJ) complex. HJ DNA is sandwiched between 2 RuvA tetramers; dsDNA enters through RuvA and exits via RuvB. An RuvB hexamer assembles on each DNA strand where it exits the tetramer. Each RuvB hexamer is contacted by two RuvA subunits (via domain III) on 2 adjacent RuvB subunits; this complex drives branch migration. In the full resolvosome a probable DNA-RuvA(4)-RuvB(12)-RuvC(2) complex forms which resolves the HJ.

It localises to the cytoplasm. The RuvA-RuvB-RuvC complex processes Holliday junction (HJ) DNA during genetic recombination and DNA repair, while the RuvA-RuvB complex plays an important role in the rescue of blocked DNA replication forks via replication fork reversal (RFR). RuvA specifically binds to HJ cruciform DNA, conferring on it an open structure. The RuvB hexamer acts as an ATP-dependent pump, pulling dsDNA into and through the RuvAB complex. HJ branch migration allows RuvC to scan DNA until it finds its consensus sequence, where it cleaves and resolves the cruciform DNA. The chain is Holliday junction branch migration complex subunit RuvA from Shewanella sp. (strain W3-18-1).